A 127-amino-acid chain; its full sequence is Small ribosomal subunit protein uS12 (127 aa).

Residue D89 is modified to 3-methylthioaspartic acid.

This sequence belongs to the universal ribosomal protein uS12 family. Part of the 30S ribosomal subunit. Contacts proteins S8 and S17. May interact with IF1 in the 30S initiation complex.

With S4 and S5 plays an important role in translational accuracy. Functionally, interacts with and stabilizes bases of the 16S rRNA that are involved in tRNA selection in the A site and with the mRNA backbone. Located at the interface of the 30S and 50S subunits, it traverses the body of the 30S subunit contacting proteins on the other side and probably holding the rRNA structure together. The combined cluster of proteins S8, S12 and S17 appears to hold together the shoulder and platform of the 30S subunit. The polypeptide is Small ribosomal subunit protein uS12 (Campylobacter fetus subsp. fetus (strain 82-40)).